We begin with the raw amino-acid sequence, 496 residues long: NAD(P)H-quinone oxidoreductase subunit 2 A, chloroplastic (496 aa).

Helical transmembrane passes span 13 to 33 (SILP…IDLL), 41 to 61 (TFWS…ILLL), 83 to 103 (IFRF…VDYI), 110 to 130 (VTEF…LCGA), 133 to 153 (LISI…LSGY), 168 to 188 (LLMG…PYGL), 213 to 233 (VSIA…LVPF), 245 to 265 (PTPV…ALAT), 279 to 299 (WHLP…LIAV), 307 to 327 (MLAY…IAGD), 338 to 358 (YMLI…SFGL), 380 to 400 (LSLV…GFFG), 413 to 435 (LYFL…SRII), and 470 to 490 (MILC…IIAI).

This sequence belongs to the complex I subunit 2 family. In terms of assembly, NDH is composed of at least 16 different subunits, 5 of which are encoded in the nucleus.

The protein resides in the plastid. It localises to the chloroplast thylakoid membrane. The enzyme catalyses a plastoquinone + NADH + (n+1) H(+)(in) = a plastoquinol + NAD(+) + n H(+)(out). It carries out the reaction a plastoquinone + NADPH + (n+1) H(+)(in) = a plastoquinol + NADP(+) + n H(+)(out). Functionally, NDH shuttles electrons from NAD(P)H:plastoquinone, via FMN and iron-sulfur (Fe-S) centers, to quinones in the photosynthetic chain and possibly in a chloroplast respiratory chain. The immediate electron acceptor for the enzyme in this species is believed to be plastoquinone. Couples the redox reaction to proton translocation, and thus conserves the redox energy in a proton gradient. The polypeptide is NAD(P)H-quinone oxidoreductase subunit 2 A, chloroplastic (Psilotum nudum (Whisk fern)).